The sequence spans 99 residues: NADH-quinone oxidoreductase subunit K (99 aa).

3 helical membrane passes run 3-23 (PANYLILSALLFTIGTVGVLV), 28-48 (IVVFMSVELMLNAVNLTLVTF), and 59-79 (IMAFFVMVVAAAEVVIGLAII).

The protein belongs to the complex I subunit 4L family. As to quaternary structure, NDH-1 is composed of 14 different subunits. Subunits NuoA, H, J, K, L, M, N constitute the membrane sector of the complex.

The protein localises to the cell membrane. The catalysed reaction is a quinone + NADH + 5 H(+)(in) = a quinol + NAD(+) + 4 H(+)(out). NDH-1 shuttles electrons from NADH, via FMN and iron-sulfur (Fe-S) centers, to quinones in the respiratory chain. The immediate electron acceptor for the enzyme in this species is believed to be a menaquinone. Couples the redox reaction to proton translocation (for every two electrons transferred, four hydrogen ions are translocated across the cytoplasmic membrane), and thus conserves the redox energy in a proton gradient. This Frankia casuarinae (strain DSM 45818 / CECT 9043 / HFP020203 / CcI3) protein is NADH-quinone oxidoreductase subunit K.